Reading from the N-terminus, the 118-residue chain is UPF0102 protein Lxx14785 (118 aa).

Belongs to the UPF0102 family.

This Leifsonia xyli subsp. xyli (strain CTCB07) protein is UPF0102 protein Lxx14785.